The chain runs to 197 residues: HTH-type transcriptional regulator BetI (197 aa).

The HTH tetR-type domain maps to 8 to 68 (PIRRSQLIHA…ATMRHLLSAL (61 aa)). The H-T-H motif DNA-binding region spans 31–50 (SIALIARLAGVSNGIISHYF).

Its pathway is amine and polyamine biosynthesis; betaine biosynthesis via choline pathway [regulation]. Functionally, repressor involved in the biosynthesis of the osmoprotectant glycine betaine. It represses transcription of the choline transporter BetT and the genes of BetAB involved in the synthesis of glycine betaine. This chain is HTH-type transcriptional regulator BetI, found in Pseudomonas aeruginosa (strain LESB58).